An 869-amino-acid chain; its full sequence is Leucine--tRNA ligase (869 aa).

Positions 42-52 (PYPSGKLHMGH) match the 'HIGH' region motif. The 'KMSKS' region signature appears at 624–628 (TMSKS). Lysine 627 is an ATP binding site.

Belongs to the class-I aminoacyl-tRNA synthetase family.

The protein resides in the cytoplasm. The catalysed reaction is tRNA(Leu) + L-leucine + ATP = L-leucyl-tRNA(Leu) + AMP + diphosphate. This Nitrosomonas europaea (strain ATCC 19718 / CIP 103999 / KCTC 2705 / NBRC 14298) protein is Leucine--tRNA ligase.